A 172-amino-acid polypeptide reads, in one-letter code: Co-chaperone protein HscB homolog (172 aa).

Positions 2-74 (NYFELFGLVE…LRRAEYLLSL (73 aa)) constitute a J domain.

It belongs to the HscB family. In terms of assembly, interacts with HscA and stimulates its ATPase activity.

Its function is as follows. Co-chaperone involved in the maturation of iron-sulfur cluster-containing proteins. Seems to help targeting proteins to be folded toward HscA. This Aeromonas hydrophila subsp. hydrophila (strain ATCC 7966 / DSM 30187 / BCRC 13018 / CCUG 14551 / JCM 1027 / KCTC 2358 / NCIMB 9240 / NCTC 8049) protein is Co-chaperone protein HscB homolog.